Consider the following 337-residue polypeptide: Phenylalanine--tRNA ligase alpha subunit (337 aa).

Glutamate 252 serves as a coordination point for Mg(2+).

The protein belongs to the class-II aminoacyl-tRNA synthetase family. Phe-tRNA synthetase alpha subunit type 1 subfamily. Tetramer of two alpha and two beta subunits. Mg(2+) is required as a cofactor.

Its subcellular location is the cytoplasm. The enzyme catalyses tRNA(Phe) + L-phenylalanine + ATP = L-phenylalanyl-tRNA(Phe) + AMP + diphosphate + H(+). In Francisella philomiragia subsp. philomiragia (strain ATCC 25017 / CCUG 19701 / FSC 153 / O#319-036), this protein is Phenylalanine--tRNA ligase alpha subunit.